The following is a 208-amino-acid chain: MLFDELISEFDRGLRSIAGVSRMSRPVPQPAAAAPAELSAAERKHAAGLMRVNHVGEVCAQALYQAQKFATSSSELKEMFEHAAREEEDHLAWTAHRLKDLDSRPSLLNPLWYAGALAIGVVAGRLGDKVSLGFMAETERQVESHLDSHLSELPAADVESRAIVEQMRADEVKHGKTATDAGGIELPMPARMLMRAASKVMTSTAYYL.

6 residues coordinate Fe cation: Glu57, Glu87, His90, Glu139, Glu171, and His174.

The protein belongs to the COQ7 family. Requires Fe cation as cofactor.

It is found in the cell membrane. The enzyme catalyses a 5-methoxy-2-methyl-3-(all-trans-polyprenyl)benzene-1,4-diol + AH2 + O2 = a 3-demethylubiquinol + A + H2O. It functions in the pathway cofactor biosynthesis; ubiquinone biosynthesis. Functionally, catalyzes the hydroxylation of 2-nonaprenyl-3-methyl-6-methoxy-1,4-benzoquinol during ubiquinone biosynthesis. The polypeptide is 3-demethoxyubiquinol 3-hydroxylase (Burkholderia thailandensis (strain ATCC 700388 / DSM 13276 / CCUG 48851 / CIP 106301 / E264)).